A 252-amino-acid polypeptide reads, in one-letter code: Small ribosomal subunit protein uS3 (252 aa).

The KH type-2 domain occupies 39-109; it reads IRNYVNTRLK…EVKIDVVEVV (71 aa). Residues 222–240 show a composition bias toward basic and acidic residues; sequence MKKIRDRRNDQRSRGGRDS. The disordered stretch occupies residues 222–252; it reads MKKIRDRRNDQRSRGGRDSRNKRRRRPKNTA. Positions 241–252 are enriched in basic residues; that stretch reads RNKRRRRPKNTA.

Belongs to the universal ribosomal protein uS3 family. In terms of assembly, part of the 30S ribosomal subunit. Forms a tight complex with proteins S10 and S14.

In terms of biological role, binds the lower part of the 30S subunit head. Binds mRNA in the 70S ribosome, positioning it for translation. This is Small ribosomal subunit protein uS3 from Chlorobium phaeobacteroides (strain BS1).